The sequence spans 127 residues: Large ribosomal subunit protein bL17 (127 aa).

The protein belongs to the bacterial ribosomal protein bL17 family. In terms of assembly, part of the 50S ribosomal subunit. Contacts protein L32.

The polypeptide is Large ribosomal subunit protein bL17 (Ligilactobacillus salivarius (strain UCC118) (Lactobacillus salivarius)).